We begin with the raw amino-acid sequence, 253 residues long: Triosephosphate isomerase, cytosolic (253 aa).

Residues asparagine 10 and lysine 12 each contribute to the substrate site. Histidine 96 serves as the catalytic Electrophile. Residue glutamate 166 is the Proton acceptor of the active site.

Belongs to the triosephosphate isomerase family. As to quaternary structure, homodimer.

It is found in the cytoplasm. The catalysed reaction is D-glyceraldehyde 3-phosphate = dihydroxyacetone phosphate. It participates in carbohydrate biosynthesis; gluconeogenesis. Its pathway is carbohydrate degradation; glycolysis; D-glyceraldehyde 3-phosphate from glycerone phosphate: step 1/1. The chain is Triosephosphate isomerase, cytosolic from Secale cereale (Rye).